We begin with the raw amino-acid sequence, 427 residues long: 3-isopropylmalate dehydratase large subunit (427 aa).

Residues Cys-308, Cys-368, and Cys-371 each contribute to the [4Fe-4S] cluster site.

Belongs to the aconitase/IPM isomerase family. LeuC type 2 subfamily. In terms of assembly, heterodimer of LeuC and LeuD. [4Fe-4S] cluster serves as cofactor.

The enzyme catalyses (2R,3S)-3-isopropylmalate = (2S)-2-isopropylmalate. Its pathway is amino-acid biosynthesis; L-leucine biosynthesis; L-leucine from 3-methyl-2-oxobutanoate: step 2/4. Its function is as follows. Catalyzes the isomerization between 2-isopropylmalate and 3-isopropylmalate, via the formation of 2-isopropylmaleate. The protein is 3-isopropylmalate dehydratase large subunit of Geotalea uraniireducens (strain Rf4) (Geobacter uraniireducens).